Consider the following 146-residue polypeptide: Monothiol glutaredoxin-5, mitochondrial (146 aa).

Positions 26-131 constitute a Glutaredoxin domain; that stretch reads RQALEQAVKE…KILKEINALA (106 aa). Lysine 43 lines the glutathione pocket. Cysteine 51 contributes to the [2Fe-2S] cluster binding site. Glutathione-binding positions include 83–87, isoleucine 95, and 108–109; these read REGIK and SD.

Belongs to the glutaredoxin family. Monothiol subfamily. As to quaternary structure, homodimer. Interacts with ISA1 and ISA2.

It localises to the mitochondrion. In terms of biological role, monothiol glutaredoxin involved in mitochondrial iron-sulfur (Fe/S) cluster transfer. Receives 2Fe/2S clusters from scaffold protein isu1 and mediates their transfer to apoproteins, to the 4Fe/FS cluster biosynthesis machinery, or export from mitochondrion. The polypeptide is Monothiol glutaredoxin-5, mitochondrial (Schizosaccharomyces pombe (strain 972 / ATCC 24843) (Fission yeast)).